The primary structure comprises 586 residues: DNA-binding protein RFX8 (586 aa).

Positions 22–97 (VIQWLVDNFC…YHYDGICIKK (76 aa)) form a DNA-binding region, RFX-type winged-helix.

It belongs to the RFX family.

The protein localises to the nucleus. Its function is as follows. May be a transcription factor. This is DNA-binding protein RFX8 (RFX8) from Homo sapiens (Human).